Consider the following 414-residue polypeptide: Putative dipeptidase TRV_05564 (414 aa).

Residues 1-20 (MAALFVSLLALTSLVPVQGA) form the signal peptide. Residues H45, D47, and E157 each coordinate Zn(2+). A disulfide bond links C96 and C186. H184 contacts substrate. Zn(2+) contacts are provided by H228 and H249. Substrate contacts are provided by R260 and D320. N-linked (GlcNAc...) asparagine glycosylation occurs at N392.

This sequence belongs to the metallo-dependent hydrolases superfamily. Peptidase M19 family. The cofactor is Zn(2+).

It carries out the reaction an L-aminoacyl-L-amino acid + H2O = 2 an L-alpha-amino acid. Its function is as follows. Hydrolyzes a wide range of dipeptides. The polypeptide is Putative dipeptidase TRV_05564 (Trichophyton verrucosum (strain HKI 0517)).